A 413-amino-acid polypeptide reads, in one-letter code: Exodeoxyribonuclease I (413 aa).

In terms of domain architecture, Exonuclease spans 12-193 (LFYDYETFGI…VSDVYATIEI (182 aa)). The Mg(2+) site is built by D15, E17, and D186. Position 17 (E17) interacts with substrate. One can recognise an ExoI SH3-like domain in the interval 202–349 (PRLFDFFFKI…QNIKIIFSKN (148 aa)). The region spanning 350-413 (NNTNQFFNVD…RYRARNFFIH (64 aa)) is the ExoI C-terminal domain.

In terms of assembly, monomer. Interacts with ssb (via C-terminus); this interaction stimulates the exonuclease activity by recruiting the enzyme to its substrate. Requires Mg(2+) as cofactor.

It carries out the reaction Exonucleolytic cleavage in the 3'- to 5'-direction to yield nucleoside 5'-phosphates.. Degrades single-stranded DNA (ssDNA) in a highly processive manner. Also functions as a DNA deoxyribophosphodiesterase that releases deoxyribose-phosphate moieties following the cleavage of DNA at an apurinic/apyrimidinic (AP) site by either an AP endonuclease or AP lyase. This is Exodeoxyribonuclease I (sbcB) from Buchnera aphidicola subsp. Acyrthosiphon pisum (strain APS) (Acyrthosiphon pisum symbiotic bacterium).